The primary structure comprises 701 residues: Elongation factor G (701 aa).

In terms of domain architecture, tr-type G spans 8–291 (SRYRNIGIVA…AVIDYLPAPV (284 aa)). GTP contacts are provided by residues 17–24 (AHVDAGKT), 89–93 (DTPGH), and 143–146 (NKMD).

Belongs to the TRAFAC class translation factor GTPase superfamily. Classic translation factor GTPase family. EF-G/EF-2 subfamily.

It is found in the cytoplasm. Its function is as follows. Catalyzes the GTP-dependent ribosomal translocation step during translation elongation. During this step, the ribosome changes from the pre-translocational (PRE) to the post-translocational (POST) state as the newly formed A-site-bound peptidyl-tRNA and P-site-bound deacylated tRNA move to the P and E sites, respectively. Catalyzes the coordinated movement of the two tRNA molecules, the mRNA and conformational changes in the ribosome. The chain is Elongation factor G from Pseudomonas fluorescens (strain SBW25).